A 257-amino-acid chain; its full sequence is Global transcriptional regulator CodY (257 aa).

A GAF domain region spans residues methionine 1–leucine 155. A DNA-binding region (H-T-H motif) is located at residues alanine 203–arginine 222.

This sequence belongs to the CodY family.

It is found in the cytoplasm. DNA-binding global transcriptional regulator which is involved in the adaptive response to starvation and acts by directly or indirectly controlling the expression of numerous genes in response to nutrient availability. During rapid exponential growth, CodY is highly active and represses genes whose products allow adaptation to nutrient depletion. The protein is Global transcriptional regulator CodY of Staphylococcus saprophyticus subsp. saprophyticus (strain ATCC 15305 / DSM 20229 / NCIMB 8711 / NCTC 7292 / S-41).